The sequence spans 61 residues: Protein transport protein Sec61 subunit beta (61 aa).

Topologically, residues 1-35 are cytoplasmic; the sequence is MKRPSTQRAPATVNKGGNSMMKFYSEDAIGLKVGP. The chain crosses the membrane as a helical span at residues 36-56; the sequence is TAVLFMSLIFIAFVIILHIMG. Residues 57 to 61 lie on the Extracellular side of the membrane; that stretch reads KYTRS.

It belongs to the SEC61-beta family. The SEC61 channel-forming translocon complex.

The protein resides in the endoplasmic reticulum membrane. Its function is as follows. Component of SEC61 channel-forming translocon complex that mediates transport of signal peptide-containing precursor polypeptides across the endoplasmic reticulum (ER). Forms a ribosome receptor and a gated pore in the ER membrane, both functions required for cotranslational translocation of nascent polypeptides. The chain is Protein transport protein Sec61 subunit beta (sec61b) from Dictyostelium discoideum (Social amoeba).